The following is a 357-amino-acid chain: tRNA N6-adenosine threonylcarbamoyltransferase (357 aa).

Fe cation contacts are provided by histidine 113 and histidine 117. Substrate is bound by residues 136–140, aspartate 169, glycine 182, and asparagine 288; that span reads LVSGG. Fe cation is bound at residue aspartate 316.

It belongs to the KAE1 / TsaD family. Fe(2+) serves as cofactor.

The protein localises to the cytoplasm. It carries out the reaction L-threonylcarbamoyladenylate + adenosine(37) in tRNA = N(6)-L-threonylcarbamoyladenosine(37) in tRNA + AMP + H(+). In terms of biological role, required for the formation of a threonylcarbamoyl group on adenosine at position 37 (t(6)A37) in tRNAs that read codons beginning with adenine. Is involved in the transfer of the threonylcarbamoyl moiety of threonylcarbamoyl-AMP (TC-AMP) to the N6 group of A37, together with TsaE and TsaB. TsaD likely plays a direct catalytic role in this reaction. The chain is tRNA N6-adenosine threonylcarbamoyltransferase from Gemmatimonas aurantiaca (strain DSM 14586 / JCM 11422 / NBRC 100505 / T-27).